The primary structure comprises 155 residues: Putative ATP synthase protein YMF19-like protein (155 aa).

3 helical membrane-spanning segments follow: residues 23–43, 89–109, and 117–137; these read FLWLCLFYITFYFVLYSVLVF, WRALILAYLTSIYFFPILGSF, and VDFGYIPTVCILLYVIFLFFF.

This sequence belongs to the ATPase protein YMF19 family.

It localises to the mitochondrion membrane. The sequence is that of Putative ATP synthase protein YMF19-like protein (YMF18) from Marchantia polymorpha (Common liverwort).